Reading from the N-terminus, the 980-residue chain is Serine/threonine-protein phosphatase 4 regulatory subunit 3 (980 aa).

Positions 1 to 105 constitute a WH1 domain; that stretch reads MTTDTRRRVK…EKICQVQGKD (105 aa). Disordered regions lie at residues 640–668, 695–861, and 885–980; these read RDKM…RQME, VSEK…SLCD, and VTAA…ARQA. Residues 695-708 show a composition bias toward polar residues; the sequence is VSEKNGPQTQNQQK. Composition is skewed to low complexity over residues 709–749, 757–789, 803–859, and 885–926; these read SSPP…SSSP, QTQA…QQTQ, EAPQ…AASL, and VTAA…SPAS. Residues 929–939 show a composition bias toward polar residues; it reads QDANSTEGTSS. The segment covering 940 to 951 has biased composition (basic and acidic residues); the sequence is EADKTTAKKGLV. The span at 953–968 shows a compositional bias: acidic residues; that stretch reads YESDSGEDDYEEDEYS.

It belongs to the SMEK family. In terms of assembly, serine/threonine-protein phosphatase 4 (PP4) occurs in different assemblies of the catalytic and one or more regulatory subunits. Probably part of a PP4 PPP4C-PPP4R2-PPP4R3 complex containing Pp4-19C, PPP4R2r and flfl. Interacts with mira. As to expression, expressed in neuroblasts.

It is found in the nucleus. The protein resides in the membrane. The protein localises to the cytoplasm. Its function is as follows. Regulatory subunit of serine/threonine-protein phosphatase 4. The probable PP4 complex Pp4-19C-PPP4R2r-flfl (PPP4C-PPP4R2-PPP4R3) is required to prevent caspase induced cell death (in vitro). May be involved in DNA damage repair. Key mediator specific for the localization of mira and associated cell fate determinants during both interphase and mitosis. Nuclear Flfl is required to exclude mira/pros from the nucleus when inefficiently bound to the cytoskeleton/cortex, whereas cytosolic or membrane-associated flfl is required for the cortical association and asymmetric localization of mira/pros/brat/stau at metaphase and anaphase. This is Serine/threonine-protein phosphatase 4 regulatory subunit 3 (flfl) from Drosophila melanogaster (Fruit fly).